The sequence spans 101 residues: Olivetolic acid cyclase (101 aa).

The Stress-response A/B barrel domain occupies 3–97 (VKHLIVLKFK…FWEKLLIFDY (95 aa)). H5 contacts 3,5,7-trioxododecanoyl-CoA. Mg(2+) is bound by residues V31, I34, and M37. Y72 serves as a coordination point for 3,5,7-trioxododecanoyl-CoA. Active-site acid/base catalyst residues include Y72 and H75.

As to quaternary structure, homodimer. As to expression, expressed in glandular trichomes and at lower levels in female flowers.

The protein resides in the cytoplasm. It carries out the reaction 3,5,7-trioxododecanoyl-CoA = olivetolate + CoA + H(+). It functions in the pathway secondary metabolite biosynthesis; terpenoid biosynthesis. Involved in the biosynthesis of cannabinoids-related terpenophenolic natural products, which have pharmacological activity. Polyketide cyclase which functions in concert with OLS/TKS to form olivetolic acid. Has no intrinsic polyketide synthase activity and requires the presence of OLS to produce olivetolic acid. The polypeptide is Olivetolic acid cyclase (Cannabis sativa (Hemp)).